The primary structure comprises 594 residues: Putative aldehyde oxidase Art an 7 (594 aa).

An N-terminal signal peptide occupies residues 1-23 (MASSIKTVILFLLPLLLAYSVLA). A disordered region spans residues 28-56 (TDGGDKPGPEIDDGGGDKPVPGNNDGASD).

In terms of processing, the N-terminus is blocked. Post-translationally, glycosylated. As to expression, expressed in pollen (at protein level).

The protein resides in the cytoplasm. The catalysed reaction is an aldehyde + O2 + H2O = a carboxylate + H2O2 + H(+). Its function is as follows. Catalyzes the oxidation of aldehydes to the corresponding carboxylate by coupling the reaction to the reduction of dioxygen to hydrogen peroxide. Substrates include glyoxal and other aldehydes. Does not have enzymatic activity on D-galactose. The polypeptide is Putative aldehyde oxidase Art an 7 (Artemisia annua (Sweet wormwood)).